A 326-amino-acid polypeptide reads, in one-letter code: Pancreas transcription factor 1 subunit alpha (326 aa).

The 53-residue stretch at 162-214 folds into the bHLH domain; sequence QLRQAANVRERRRMQSINDAFEGLRSHIPTLPYEKRLSKVDTLRLAIGYINFL. Gly residues predominate over residues 229–240; it reads TGGCGGPGGSRH. Disordered stretches follow at residues 229–249 and 304–326; these read TGGC…PGNQ and DPRK…EFVS.

In terms of assembly, component of the pancreas transcription factor 1 complex (PTF1) which is composed of TCF3/p75, TCF12/p64 and PTF1A/p48. TCF3 is responsible for the nuclear import of the p48/p64 complex. Interacts with TCF3 and RBPSUH/RBP-Jkappa. In terms of tissue distribution, exocrine pancreas-specific. Expressed in azaserine-induced pancreatic tumors (at protein level). Expressed in AR42J cells but not in ARIP, DSL6A, or DSL6B cells. Down-regulation is associated with the change of an azaserine-induced acinar cell carcinoma to a ductal phenotype.

It localises to the nucleus. The protein localises to the cytoplasm. Transcription factor implicated in the cell fate determination in various organs. Binds to the E-box consensus sequence 5'-CANNTG-3'. Plays a role in early and late pancreas development and differentiation. Important for determining whether cells allocated to the pancreatic buds continue towards pancreatic organogenesis or revert back to duodenal fates. May be involved in the maintenance of exocrine pancreas-specific gene expression including ELA1 and amylase. Required for the formation of pancreatic acinar and ductal cells. Plays an important role in cerebellar development. Directly regulated by FOXN4 and RORC during retinal development, FOXN4-PTF1A pathway plays a central role in directing the differentiation of retinal progenitors towards horizontal and amacrine fates. The sequence is that of Pancreas transcription factor 1 subunit alpha (Ptf1a) from Rattus norvegicus (Rat).